The primary structure comprises 139 residues: D-ribose pyranase (139 aa).

The active-site Proton donor is H20. Substrate is bound by residues D28, H106, and 128–130; that span reads YAN.

This sequence belongs to the RbsD / FucU family. RbsD subfamily. In terms of assembly, homodecamer.

The protein localises to the cytoplasm. The enzyme catalyses beta-D-ribopyranose = beta-D-ribofuranose. The protein operates within carbohydrate metabolism; D-ribose degradation; D-ribose 5-phosphate from beta-D-ribopyranose: step 1/2. Catalyzes the interconversion of beta-pyran and beta-furan forms of D-ribose. The sequence is that of D-ribose pyranase from Aliivibrio salmonicida (strain LFI1238) (Vibrio salmonicida (strain LFI1238)).